The following is a 375-amino-acid chain: 23S rRNA (uracil(747)-C(5))-methyltransferase RlmC (375 aa).

[4Fe-4S] cluster contacts are provided by C3, C11, C14, and C87. Residues Q212, F241, E262, and N307 each contribute to the S-adenosyl-L-methionine site. The Nucleophile role is filled by C334.

Belongs to the class I-like SAM-binding methyltransferase superfamily. RNA M5U methyltransferase family. RlmC subfamily.

The enzyme catalyses uridine(747) in 23S rRNA + S-adenosyl-L-methionine = 5-methyluridine(747) in 23S rRNA + S-adenosyl-L-homocysteine + H(+). Its function is as follows. Catalyzes the formation of 5-methyl-uridine at position 747 (m5U747) in 23S rRNA. The sequence is that of 23S rRNA (uracil(747)-C(5))-methyltransferase RlmC from Escherichia coli (strain SE11).